A 1178-amino-acid polypeptide reads, in one-letter code: MLKFRTVHGGLRLLGIRRTSTAPAASPNVRRLEYKPIKKVMVANRGEIAIRVFRACTELGIRTVAIYSEQDTGQMHRQKADEAYLIGRGLAPVQAYLHIPDIIKVAKENNVDAVHPGYGFLSERADFAQACQDAGVRFIGPSPEVVRKMGDKVEARAIAIAAGVPVVPGTDAPITSLHEAHEFSNTYGFPIIFKAAYGGGGRGMRVVHSYEELEENYTRAYSEALAAFGNGALFVEKFIEKPRHIEVQILGDQYGNILHLYERDCSIQRRHQKVVEIAPAAHLDPQLRTRLTSDSVKLAKQVGYENAGTVEFLVDRHGKHYFIEVNSRLQVEHTVTEEITDVDLVHAQIHVAEGRSLPDLGLRQENIRINGCAIQCRVTTEDPARSFQPDTGRIEVFRSGEGMGIRLDNASAFQGAVISPHYDSLLVKVIAHGKDHPTAATKMSRALAEFRVRGVKTNIAFLQNVLNNQQFLAGTVDTQFIDENPELFQLRPAQNRAQKLLHYLGHVMVNGPTTPIPVKASPSPTDPVVPAVPIGPPPAGFRDILLREGPEGFARAVRNHPGLLLMDTTFRDAHQSLLATRVRTHDLKKIAPYVAHNFSKLFSMENWGGATFDVAMRFLYECPWRRLQELRELIPNIPFQMLLRGANAVGYTNYPDNVVFKFCEVAKENGMDVFRVFDSLNYLPNMLLGMEAAGSAGGVVEAAISYTGDVADPSRTKYSLQYYMGLAEELVRAGTHILCIKDMAGLLKPTACTMLVSSLRDRFPDLPLHIHTHDTSGAGVAAMLACAQAGADVVDVAADSMSGMTSQPSMGALVACTRGTPLDTEVPMERVFDYSEYWEGARGLYAAFDCTATMKSGNSDVYENEIPGGQYTNLHFQAHSMGLGSKFKEVKKAYVEANQMLGDLIKVTPSSKIVGDLAQFMVQNGLSRAEAEAQAEELSFPRSVVEFLQGYIGVPHGGFPEPFRSKVLKDLPRVEGRPGASLPPLDLQALEKELVDRHGEEVTPEDVLSAAMYPDVFAHFKDFTATFGPLDSLNTRLFLQGPKIAEEFEVELERGKTLHIKALAVSDLNRAGQRQVFFELNGQLRSILVKDTQAMKEMHFHPKALKDVKGQIGAPMPGKVIDIKVVAGAKVAKGQPLCVLSAMKMETVVTSPMEGTVRKVHVTKDMTLEGDDLILEIE.

The N-terminal 20 residues, 1–20 (MLKFRTVHGGLRLLGIRRTS), are a transit peptide targeting the mitochondrion. An N6-acetyllysine mark is found at Lys-35 and Lys-39. One can recognise a Biotin carboxylation domain in the interval 36–486 (PIKKVMVANR…DTQFIDENPE (451 aa)). Residue Lys-79 is modified to N6-acetyllysine; alternate. Lys-79 carries the N6-succinyllysine; alternate modification. Residues Lys-148 and Lys-152 each carry the N6-acetyllysine modification. The ATP site is built by Lys-152 and Glu-236. In terms of domain architecture, ATP-grasp spans 156-353 (RAIAIAAGVP…LVHAQIHVAE (198 aa)). An N6-acetyllysine modification is found at Lys-241. An ATP-binding site is contributed by His-271. N6-acetyllysine is present on residues Lys-297 and Lys-319. Residue Arg-328 is part of the active site. Lys-434 is modified (N6-acetyllysine). N6-succinyllysine is present on Lys-442. Residues 563 to 832 (LLLMDTTFRD…DTEVPMERVF (270 aa)) enclose the Pyruvate carboxyltransferase domain. Residue 571-575 (RDAHQ) coordinates substrate. Asp-572 lines the Mn(2+) pocket. Lys-589 bears the N6-acetyllysine mark. A substrate-binding site is contributed by Arg-644. 2 positions are modified to N6-acetyllysine: Lys-661 and Lys-717. Lys-741 lines the Mn(2+) pocket. N6-carboxylysine is present on Lys-741. Lys-748 carries the post-translational modification N6-acetyllysine. 2 residues coordinate Mn(2+): His-771 and His-773. Lys-892 bears the N6-acetyllysine mark. A substrate-binding site is contributed by Thr-908. N6-acetyllysine occurs at positions 969 and 992. The residue at position 1003 (Thr-1003) is a Phosphothreonine. N6-acetyllysine is present on residues Lys-1061, Lys-1090, and Lys-1124. Positions 1109-1178 (KGQIGAPMPG…EGDDLILEIE (70 aa)) constitute a Biotinyl-binding domain. The residue at position 1144 (Lys-1144) is an N6-biotinyllysine.

Homotetramer. Interacts (via the biotin carboxylation domain) with SIRT4. Requires biotin as cofactor. The cofactor is Mn(2+). Acetylation of Lys-748 might play a role in catalytic activity regulation.

The protein localises to the mitochondrion matrix. The catalysed reaction is hydrogencarbonate + pyruvate + ATP = oxaloacetate + ADP + phosphate + H(+). Its pathway is carbohydrate biosynthesis; gluconeogenesis. Pyruvate carboxylase catalyzes a 2-step reaction, involving the ATP-dependent carboxylation of the covalently attached biotin in the first step and the transfer of the carboxyl group to pyruvate in the second. Catalyzes in a tissue specific manner, the initial reactions of glucose (liver, kidney) and lipid (adipose tissue, liver, brain) synthesis from pyruvate. The polypeptide is Pyruvate carboxylase, mitochondrial (Homo sapiens (Human)).